The sequence spans 624 residues: Kelch-like protein diablo (624 aa).

Positions 1-55 (MGDPLLPGSTGLGSGSATAATGGSVTAGSGLGNGGTGGAERPPSPARLTHTSEKH) are disordered. Positions 15–28 (GSATAATGGSVTAG) are enriched in low complexity. Gly residues predominate over residues 29-38 (SGLGNGGTGG). Positions 73-140 (CDVVLNVGGR…CYTAHIIVEE (68 aa)) constitute a BTB domain. Positions 175 to 277 (CLGIRAFADT…SPKFLVGTVG (103 aa)) constitute a BACK domain. Kelch repeat units lie at residues 324 to 370 (VLFA…VLND), 372 to 418 (LYAV…VLDG), 419 to 465 (FLYA…VLSG), 467 to 512 (LYAI…VFNN), 514 to 559 (IYAV…VVNG), and 560 to 606 (QLYA…VMRA).

It functions in the pathway protein modification; protein ubiquitination. In terms of biological role, probable substrate-specific adapter of an E3 ubiquitin-protein ligase complex which mediates the ubiquitination and subsequent proteasomal degradation of target proteins. May have a role in synapse differentiation and growth. This chain is Kelch-like protein diablo, found in Drosophila grimshawi (Hawaiian fruit fly).